The following is a 430-amino-acid chain: Phosphomethylpyrimidine synthase (430 aa).

Substrate-binding positions include Asn-67, Met-96, Tyr-125, His-161, 183-185 (SRG), 224-227 (DALR), and Glu-263. Residue His-267 participates in Zn(2+) binding. Position 290 (Tyr-290) interacts with substrate. A Zn(2+)-binding site is contributed by His-331. [4Fe-4S] cluster-binding residues include Cys-406, Cys-409, and Cys-413.

Belongs to the ThiC family. As to quaternary structure, homodimer. It depends on [4Fe-4S] cluster as a cofactor.

It carries out the reaction 5-amino-1-(5-phospho-beta-D-ribosyl)imidazole + S-adenosyl-L-methionine = 4-amino-2-methyl-5-(phosphooxymethyl)pyrimidine + CO + 5'-deoxyadenosine + formate + L-methionine + 3 H(+). It participates in cofactor biosynthesis; thiamine diphosphate biosynthesis. Catalyzes the synthesis of the hydroxymethylpyrimidine phosphate (HMP-P) moiety of thiamine from aminoimidazole ribotide (AIR) in a radical S-adenosyl-L-methionine (SAM)-dependent reaction. This chain is Phosphomethylpyrimidine synthase, found in Campylobacter jejuni (strain RM1221).